The primary structure comprises 171 residues: Shikimate kinase (171 aa).

14-19 (GAGKST) lines the ATP pocket. S18 is a binding site for Mg(2+). Substrate-binding residues include D36, R60, and G82. R120 lines the ATP pocket. Residue R139 coordinates substrate. An ATP-binding site is contributed by Q156.

This sequence belongs to the shikimate kinase family. In terms of assembly, monomer. The cofactor is Mg(2+).

It localises to the cytoplasm. The enzyme catalyses shikimate + ATP = 3-phosphoshikimate + ADP + H(+). It functions in the pathway metabolic intermediate biosynthesis; chorismate biosynthesis; chorismate from D-erythrose 4-phosphate and phosphoenolpyruvate: step 5/7. In terms of biological role, catalyzes the specific phosphorylation of the 3-hydroxyl group of shikimic acid using ATP as a cosubstrate. The sequence is that of Shikimate kinase from Psychromonas ingrahamii (strain DSM 17664 / CCUG 51855 / 37).